The following is a 397-amino-acid chain: Adenylosuccinate synthetase (397 aa).

GTP is bound by residues Gly11–Lys17 and Gly39–Thr41. Asp12 acts as the Proton acceptor in catalysis. The Mg(2+) site is built by Asp12 and Gly39. IMP is bound by residues Asp12 to Lys15, Asn37 to His40, Thr125, Arg139, Gln212, Thr227, and Arg290. His40 acts as the Proton donor in catalysis. Ser286 to Arg292 is a binding site for substrate. GTP is bound by residues Arg292, Lys318–Asp320, and Ser386–Gly388.

This sequence belongs to the adenylosuccinate synthetase family. In terms of assembly, homodimer. Mg(2+) is required as a cofactor.

It localises to the cytoplasm. It carries out the reaction IMP + L-aspartate + GTP = N(6)-(1,2-dicarboxyethyl)-AMP + GDP + phosphate + 2 H(+). It functions in the pathway purine metabolism; AMP biosynthesis via de novo pathway; AMP from IMP: step 1/2. In terms of biological role, plays an important role in the de novo pathway of purine nucleotide biosynthesis. Catalyzes the first committed step in the biosynthesis of AMP from IMP. In Thermotoga maritima (strain ATCC 43589 / DSM 3109 / JCM 10099 / NBRC 100826 / MSB8), this protein is Adenylosuccinate synthetase.